The following is a 603-amino-acid chain: Deuterosome assembly protein 1 (603 aa).

Coiled coils occupy residues 14 to 59 (CEAE…NAQT), 85 to 197 (MTQN…GKKQ), 227 to 278 (IEKL…ELQS), 336 to 399 (QDQP…KQLK), and 454 to 480 (HTSI…NGKS). Ser-546 carries the post-translational modification Phosphoserine. A coiled-coil region spans residues 557–600 (AAQHFLLEEEKRAKELEKLLNTHIDELQRHTEFTLNKYSKLKQN).

It belongs to the CEP63 family. As to quaternary structure, interacts with CEP152; the interaction is mutually exclusive with CEP63.

Its subcellular location is the cytoplasm. Key structural component of the deuterosome, a structure that promotes de novo centriole amplification in multiciliated cells. Deuterosome-mediated centriole amplification occurs in terminally differentiated multiciliated cells and can generate more than 100 centrioles. Probably sufficient for the specification and formation of the deuterosome inner core. Interacts with CEP152 and recruits PLK4 to activate centriole biogenesis. The chain is Deuterosome assembly protein 1 from Macaca fascicularis (Crab-eating macaque).